A 526-amino-acid polypeptide reads, in one-letter code: Delayed-rectifier potassium channel regulatory subunit KCNS1 (526 aa).

Over 1–217 (MLMLLVRGTH…LTMENPGYSL (217 aa)) the chain is Cytoplasmic. Residues 218–239 (PSKLFSCVSISVVLASIAAMCI) form a helical membrane-spanning segment. The Extracellular portion of the chain corresponds to 240–270 (HSLPEYQAREAAAAVAAVAAGRSPEGVRDDP). The helical transmembrane segment at 271-293 (VLRRLEYFCIAWFSFEVSSRLLL) threads the bilayer. The Cytoplasmic portion of the chain corresponds to 294-304 (APSTRNFFCHP). A helical membrane pass occupies residues 305 to 322 (LNLIDIVSVLPFYLTLLA). At 323-337 (GVALGDQGGKEFGHL) the chain is on the extracellular side. A helical; Voltage-sensor membrane pass occupies residues 338-358 (GKVVQVFRLMRIFRVLKLARH). Residues 359–373 (STGLRSLGATLKHSY) lie on the Cytoplasmic side of the membrane. A helical transmembrane segment spans residues 374 to 395 (REVGILLLYLAVGVSVFSGVAY). Topologically, residues 396-408 (TAEKEEDVGFNTI) are extracellular. Residues 409–420 (PACWWWGTVSMT) constitute an intramembrane region (helical). The Selectivity filter motif lies at 421–426 (TVGYGD). Residues 421-428 (TVGYGDVV) lie within the membrane without spanning it. Over 429-435 (PVTVAGK) the chain is Extracellular. A helical transmembrane segment spans residues 436-464 (LAASGCILGGILVVALPITIIFNKFSHFY). The Cytoplasmic segment spans residues 465-526 (RRQKALEAAV…PSEPPHPQMY (62 aa)). Positions 491–526 (GVSEASLETSRETSQEGRSADLESQAPSEPPHPQMY) are disordered. Residues 499-511 (TSRETSQEGRSAD) are compositionally biased toward basic and acidic residues.

Belongs to the potassium channel family. S (TC 1.A.1.2) subfamily. Kv9.1/KCNS1 sub-subfamily. In terms of assembly, heterotetramer with KCNB1. Heterotetramer with KCNB2. Does not form homomultimers.

It is found in the cell membrane. In terms of biological role, potassium channel regulatory subunit that modulate the delayed rectifier voltage-gated potassium channel activity of KCNB1 and KCNB2 by altering their kinetics, expression levels, and shifting the half-inactivation potential to more polarized values. While it does not form functional channels on its own, it can form functional heterotetrameric channels with KCNB1 and KCNB2. Each regulatory subunit has unique regulatory properties that can lead to extensive inhibition, significant changes in kinetics, and/or substantial shifts in the voltage dependencies of the inactivation process. The protein is Delayed-rectifier potassium channel regulatory subunit KCNS1 of Pongo abelii (Sumatran orangutan).